Reading from the N-terminus, the 232-residue chain is Ribosomal RNA small subunit methyltransferase G (232 aa).

Residues glycine 75, phenylalanine 80, alanine 126–glutamate 127, and arginine 143 contribute to the S-adenosyl-L-methionine site.

This sequence belongs to the methyltransferase superfamily. RNA methyltransferase RsmG family.

It localises to the cytoplasm. Its function is as follows. Specifically methylates the N7 position of a guanine in 16S rRNA. The polypeptide is Ribosomal RNA small subunit methyltransferase G (Fusobacterium nucleatum subsp. nucleatum (strain ATCC 25586 / DSM 15643 / BCRC 10681 / CIP 101130 / JCM 8532 / KCTC 2640 / LMG 13131 / VPI 4355)).